A 189-amino-acid chain; its full sequence is Hypoxanthine/guanine phosphoribosyltransferase (189 aa).

Belongs to the purine/pyrimidine phosphoribosyltransferase family. Archaeal HPRT subfamily. As to quaternary structure, homodimer.

The protein localises to the cytoplasm. The enzyme catalyses IMP + diphosphate = hypoxanthine + 5-phospho-alpha-D-ribose 1-diphosphate. It carries out the reaction GMP + diphosphate = guanine + 5-phospho-alpha-D-ribose 1-diphosphate. It functions in the pathway purine metabolism; IMP biosynthesis via salvage pathway; IMP from hypoxanthine: step 1/1. Its function is as follows. Catalyzes a salvage reaction resulting in the formation of IMP that is energically less costly than de novo synthesis. The protein is Hypoxanthine/guanine phosphoribosyltransferase of Methanothermus fervidus (strain ATCC 43054 / DSM 2088 / JCM 10308 / V24 S).